The sequence spans 298 residues: (DL)-glycerol-3-phosphatase 1, mitochondrial (298 aa).

Residues 1–46 (MLTTPTRFVALRIPFRSSNKIPISIAPSPKVFPRKPVIRVPASLRF) constitute a mitochondrion transit peptide. Aspartate 77 serves as the catalytic Nucleophile. Mg(2+) is bound by residues aspartate 77, aspartate 79, and aspartate 242. Aspartate 79 serves as the catalytic Proton donor.

This sequence belongs to the HAD-like hydrolase superfamily. DOG/GPP family. Requires Mg(2+) as cofactor. In terms of tissue distribution, ubiquitous with highest expression in siliques. Mainly restricted to the meristem of immature flower and vascular elements of the root, shoot, leave, siliqua and developing embryo (at the protein level).

The protein resides in the mitochondrion. It catalyses the reaction sn-glycerol 1-phosphate + H2O = glycerol + phosphate. It carries out the reaction sn-glycerol 3-phosphate + H2O = glycerol + phosphate. The enzyme catalyses 5-amino-6-(5-phospho-D-ribitylamino)uracil + H2O = 5-amino-6-(D-ribitylamino)uracil + phosphate. In terms of biological role, acts as a glycerol-3-phosphatase with higher stereospecificity for L-glycerol-3-phosphate than DL-glycerol-3-phosphate. Can also dephosphorylate in vitro 5-amino-6-(5-phospho-D-ribitylamino)uracil, also known as ARPP. The protein is (DL)-glycerol-3-phosphatase 1, mitochondrial of Arabidopsis thaliana (Mouse-ear cress).